We begin with the raw amino-acid sequence, 72 residues long: MDTDVTNVEDIINEIDREKEEILKNVEIENNKNINKNHPSGYIREALVINTSSNSDSIDKEVIECICHDVGI.

Belongs to the orthopoxvirus OPG197 family.

The protein is Protein OPG197 (OPG197) of Bos taurus (Bovine).